The sequence spans 207 residues: MGMLEARELLCERDERTLFSGLSFTLNAGEWVQITGSNGAGKTTLLRLLTGLSRPDAGEVLWQGQPLHQVRDSYHQTLLWIGHQPGIKTRLTALENLHFYHRDGDAAQCLEALAQAGLAGFEDIPVNQLSAGQQRRVALARLWLTRATLWILDEPFTAIDVNGVDRLTQRMAQHTEQGGIVILTTHQPLNVAESKIRRISLTQTRAA.

The ABC transporter domain maps to 4-207; sequence LEARELLCER…RISLTQTRAA (204 aa). 36 to 43 lines the ATP pocket; that stretch reads GSNGAGKT.

This sequence belongs to the ABC transporter superfamily. CcmA exporter (TC 3.A.1.107) family. As to quaternary structure, the complex is composed of two ATP-binding proteins (CcmA) and two transmembrane proteins (CcmB).

It is found in the cell inner membrane. It catalyses the reaction heme b(in) + ATP + H2O = heme b(out) + ADP + phosphate + H(+). Its function is as follows. Part of the ABC transporter complex CcmAB involved in the biogenesis of c-type cytochromes; once thought to export heme, this seems not to be the case, but its exact role is uncertain. Responsible for energy coupling to the transport system. The chain is Cytochrome c biogenesis ATP-binding export protein CcmA from Shigella flexneri.